A 248-amino-acid polypeptide reads, in one-letter code: 3-deoxy-manno-octulosonate cytidylyltransferase (248 aa).

This sequence belongs to the KdsB family.

Its subcellular location is the cytoplasm. It carries out the reaction 3-deoxy-alpha-D-manno-oct-2-ulosonate + CTP = CMP-3-deoxy-beta-D-manno-octulosonate + diphosphate. The protein operates within nucleotide-sugar biosynthesis; CMP-3-deoxy-D-manno-octulosonate biosynthesis; CMP-3-deoxy-D-manno-octulosonate from 3-deoxy-D-manno-octulosonate and CTP: step 1/1. Its pathway is bacterial outer membrane biogenesis; lipopolysaccharide biosynthesis. Activates KDO (a required 8-carbon sugar) for incorporation into bacterial lipopolysaccharide in Gram-negative bacteria. In Escherichia coli O139:H28 (strain E24377A / ETEC), this protein is 3-deoxy-manno-octulosonate cytidylyltransferase.